Consider the following 525-residue polypeptide: Cysteine--tRNA ligase (525 aa).

Cysteine 49 contributes to the Zn(2+) binding site. A 'HIGH' region motif is present at residues 51 to 61 (VTVYDLCHLGH). Residues cysteine 258, histidine 283, and glutamate 287 each coordinate Zn(2+). The 'KMSKS' region signature appears at 315-319 (KMSKS). Residue lysine 318 participates in ATP binding.

This sequence belongs to the class-I aminoacyl-tRNA synthetase family. Monomer. Requires Zn(2+) as cofactor.

The protein localises to the cytoplasm. It catalyses the reaction tRNA(Cys) + L-cysteine + ATP = L-cysteinyl-tRNA(Cys) + AMP + diphosphate. In Synechococcus sp. (strain JA-2-3B'a(2-13)) (Cyanobacteria bacterium Yellowstone B-Prime), this protein is Cysteine--tRNA ligase.